Reading from the N-terminus, the 307-residue chain is Transaldolase (307 aa).

The active-site Schiff-base intermediate with substrate is Lys-125.

It belongs to the transaldolase family. Type 1 subfamily.

The protein localises to the cytoplasm. The enzyme catalyses D-sedoheptulose 7-phosphate + D-glyceraldehyde 3-phosphate = D-erythrose 4-phosphate + beta-D-fructose 6-phosphate. The protein operates within carbohydrate degradation; pentose phosphate pathway; D-glyceraldehyde 3-phosphate and beta-D-fructose 6-phosphate from D-ribose 5-phosphate and D-xylulose 5-phosphate (non-oxidative stage): step 2/3. Its function is as follows. Transaldolase is important for the balance of metabolites in the pentose-phosphate pathway. This chain is Transaldolase, found in Pseudomonas aeruginosa (strain ATCC 15692 / DSM 22644 / CIP 104116 / JCM 14847 / LMG 12228 / 1C / PRS 101 / PAO1).